The chain runs to 426 residues: DUF724 domain-containing protein 9 (426 aa).

2 stretches are compositionally biased toward polar residues: residues 164–184 (ESSL…NANE) and 213–222 (PRNQNASVND). The interval 164–248 (ESSLTQGSGD…REESLCSDAS (85 aa)) is disordered. Residues 223–242 (STRENENSEDINRKRKREES) show a composition bias toward basic and acidic residues. The DUF724 domain occupies 256-425 (LPFEKKLSIW…LQFQTTASAP (170 aa)). Residues 370–402 (AEKESIKIENERKILELQRLNEEVDKEIAQSKS) adopt a coiled-coil conformation.

Expressed in flowers.

Its subcellular location is the nucleus. Functionally, may be involved in the polar growth of plant cells via transportation of RNAs. The protein is DUF724 domain-containing protein 9 of Arabidopsis thaliana (Mouse-ear cress).